We begin with the raw amino-acid sequence, 385 residues long: Arginine biosynthesis bifunctional protein ArgJ (385 aa).

Substrate contacts are provided by Thr-142, Lys-168, Thr-179, Glu-259, Asn-380, and Thr-385. The active-site Nucleophile is the Thr-179.

The protein belongs to the ArgJ family. Heterotetramer of two alpha and two beta chains.

The protein localises to the cytoplasm. It catalyses the reaction N(2)-acetyl-L-ornithine + L-glutamate = N-acetyl-L-glutamate + L-ornithine. The catalysed reaction is L-glutamate + acetyl-CoA = N-acetyl-L-glutamate + CoA + H(+). It participates in amino-acid biosynthesis; L-arginine biosynthesis; L-ornithine and N-acetyl-L-glutamate from L-glutamate and N(2)-acetyl-L-ornithine (cyclic): step 1/1. The protein operates within amino-acid biosynthesis; L-arginine biosynthesis; N(2)-acetyl-L-ornithine from L-glutamate: step 1/4. Its function is as follows. Catalyzes two activities which are involved in the cyclic version of arginine biosynthesis: the synthesis of N-acetylglutamate from glutamate and acetyl-CoA as the acetyl donor, and of ornithine by transacetylation between N(2)-acetylornithine and glutamate. The chain is Arginine biosynthesis bifunctional protein ArgJ from Leptospira interrogans serogroup Icterohaemorrhagiae serovar copenhageni (strain Fiocruz L1-130).